Here is a 454-residue protein sequence, read N- to C-terminus: NADP-specific glutamate dehydrogenase (454 aa).

Position 2 is an N-acetylserine (serine 2). Residue lysine 114 is part of the active site.

It belongs to the Glu/Leu/Phe/Val dehydrogenases family. Homohexamer.

The enzyme catalyses L-glutamate + NADP(+) + H2O = 2-oxoglutarate + NH4(+) + NADPH + H(+). The chain is NADP-specific glutamate dehydrogenase (GDH) from Neurospora sitophila (Chrysonilia sitophila).